Reading from the N-terminus, the 159-residue chain is SsrA-binding protein (159 aa).

This sequence belongs to the SmpB family.

The protein resides in the cytoplasm. Required for rescue of stalled ribosomes mediated by trans-translation. Binds to transfer-messenger RNA (tmRNA), required for stable association of tmRNA with ribosomes. tmRNA and SmpB together mimic tRNA shape, replacing the anticodon stem-loop with SmpB. tmRNA is encoded by the ssrA gene; the 2 termini fold to resemble tRNA(Ala) and it encodes a 'tag peptide', a short internal open reading frame. During trans-translation Ala-aminoacylated tmRNA acts like a tRNA, entering the A-site of stalled ribosomes, displacing the stalled mRNA. The ribosome then switches to translate the ORF on the tmRNA; the nascent peptide is terminated with the 'tag peptide' encoded by the tmRNA and targeted for degradation. The ribosome is freed to recommence translation, which seems to be the essential function of trans-translation. The polypeptide is SsrA-binding protein (Bifidobacterium adolescentis (strain ATCC 15703 / DSM 20083 / NCTC 11814 / E194a)).